The sequence spans 212 residues: MAKQYDVLFRLLLIGDSGVGKTCLLCRFTDNEFHSSHISTIGVDFKMKTIEVDGIKVRIQIWDTAGQERYQTITKQYYRRAQGIFLVYDISSERSYQHIMKWVSDVDEYAPEGVQKILIGNKADEEQKRQVGREQGQQLAREYGMDFYETSACTNLNIKESFTRLTELVLQAHRKELEGLRTRANHELALAELEEDEGKPEGPANSSKTCWC.

GTP-binding residues include Ser17, Gly18, Val19, Gly20, Lys21, Thr22, Cys23, Ser35, Ser39, and Thr40. Thr22 provides a ligand contact to Mg(2+). 2 short sequence motifs (switch) span residues 31–45 (NEFH…GVDF) and 63–80 (DTAG…YYRR). Residues Thr40 and Asp63 each contribute to the Mg(2+) site. The GTP site is built by Gly66, Asn121, Lys122, Asp124, Ser151, and Ala152. The interval 192 to 212 (ELEEDEGKPEGPANSSKTCWC) is disordered. Residues Cys210 and Cys212 are each lipidated (S-geranylgeranyl cysteine). A Cysteine methyl ester modification is found at Cys212.

It belongs to the small GTPase superfamily. Rab family. In terms of assembly, the GTP bound form of RAB15 interacts with REP15. Interacts (GTP-bound form) with MICAL1, MICAL3, MICALCL, EHBP1 and EHBP1L1. Mg(2+) serves as cofactor.

It is found in the cell membrane. The catalysed reaction is GTP + H2O = GDP + phosphate + H(+). Regulated by guanine nucleotide exchange factors (GEFs) which promote the exchange of bound GDP for free GTP. Regulated by GTPase activating proteins (GAPs) which increase the GTP hydrolysis activity. Inhibited by GDP dissociation inhibitors (GDIs). Its function is as follows. The small GTPases Rab are key regulators of intracellular membrane trafficking, from the formation of transport vesicles to their fusion with membranes. Rabs cycle between an inactive GDP-bound form and an active GTP-bound form that is able to recruit to membranes different sets of downstream effectors directly responsible for vesicle formation, movement, tethering and fusion. RAB15 may act in concert with RAB3A in regulating aspects of synaptic vesicle membrane flow within the nerve terminal. This chain is Ras-related protein Rab-15 (RAB15), found in Bos taurus (Bovine).